The following is a 675-amino-acid chain: Secretogranin-1 (675 aa).

An N-terminal signal peptide occupies residues 1–20 (MQRAMLLGLLGAAALAAVIS). A disulfide bond links Cys-36 and Cys-57. Basic and acidic residues predominate over residues 64 to 90 (SGKEVKGEEKGENENSKFEVRLLRDPS). Disordered regions lie at residues 64–507 (SGKE…YPTT) and 528–555 (NSDF…VTMT). 5 positions are modified to phosphoserine: Ser-93, Ser-99, Ser-100, Ser-129, and Ser-147. O-linked (Xyl...) (chondroitin sulfate) serine glycosylation occurs at Ser-93. 2 stretches are compositionally biased toward basic and acidic residues: residues 148–161 (KEAK…RGGK) and 168–248 (GKIY…KPQE). Position 190 is a phosphoserine (Ser-190). Residue Ser-236 is glycosylated (O-linked (Xyl...) (chondroitin sulfate) serine). Acidic residues predominate over residues 250–269 (PDQDQSEEESEEGEEGEEGA). Ser-255, Ser-259, Ser-291, Ser-309, and Ser-333 each carry phosphoserine. Basic and acidic residues predominate over residues 292–311 (YEGRRPLSEERKHAAGESKD). At Tyr-339 the chain carries Sulfotyrosine. Composition is skewed to basic and acidic residues over residues 361–410 (GSEE…EGAK) and 429–452 (SRQE…DTAK). Phosphoserine occurs at positions 362, 372, 375, and 397. Residue Tyr-469 is modified to Sulfotyrosine. Residues Ser-490, Ser-529, and Ser-540 each carry the phosphoserine modification. The residue at position 563 (Tyr-563) is a Sulfotyrosine. The interval 620 to 646 (DFYDSEEQMGPHQEAEDEKDRADQRVL) is disordered. Tyr-622 is subject to Sulfotyrosine; partial. At Ser-624 the chain carries Phosphoserine. The span at 637 to 646 (EKDRADQRVL) shows a compositional bias: basic and acidic residues. Arg-674 carries the post-translational modification Arginine amide; in CCB peptide short form.

This sequence belongs to the chromogranin/secretogranin protein family. Interacts with ITPR1 in the secretory granules. In terms of processing, extensively processed in glucagonoma tissue by limited proteolysis at conserved basic residues. Alternative processing are seen in different tissues. The proglucagon-converting enzymes present in transformed alpha-cells are likely candidates to be involved in tissue-specific processing. Expressed in the brain, adrenal medulla and anterior pituitary. In the brain, localized to the hippocampal formation, the endocrine hypothalamus, the olfactory system, and in anatomically distinct structures in the pons-medulla.

It localises to the secreted. Functionally, secretogranin-1 is a neuroendocrine secretory granule protein, which may be the precursor for other biologically active peptides. This chain is Secretogranin-1 (Chgb), found in Rattus norvegicus (Rat).